A 444-amino-acid polypeptide reads, in one-letter code: MREILHIQGGQCGNQIGSKFWEVVCDEHGIDPTGRYMGTSDVQLERVNVYYNEASCGRFVPRAVLMDLEPGTMDAVRTGPYGQIFRPDNFVFGQSGAGNNWAKGHYTEGAELIDSVLDVVRKEAENCDCLQGFQVCHSLGGGTGSGMGTLLISKIREEYPDRMMMTFSVFPSPKVSDTVVEPYNATLSVHQLVENADECMVLDNEALYDICFRTLKLTTPSFGDLNHLISATMSGVTCCLRFPGQLNSDLRKLAVNLIPFPRLHFFMVGFAPLTSRGSQQYRSLTVPELTQQMWDSKNMMCAADPRHGRYLTASAMFRGKMSTKEVDEQMINVQNKNSSYFVEWIPNNVKSSVCDIPPRGLSMSSTFVGNSTSIQEMFRRVSEQFTAMFRRKAFLHWYTGEGMDEMEFTEAESNMNDLVSEYQQYQDATADEEADYEEEEAAAE.

Q11, E69, S138, G142, T143, G144, N204, and N226 together coordinate GTP. E69 is a Mg(2+) binding site.

This sequence belongs to the tubulin family. Dimer of alpha and beta chains. A typical microtubule is a hollow water-filled tube with an outer diameter of 25 nm and an inner diameter of 15 nM. Alpha-beta heterodimers associate head-to-tail to form protofilaments running lengthwise along the microtubule wall with the beta-tubulin subunit facing the microtubule plus end conferring a structural polarity. Microtubules usually have 13 protofilaments but different protofilament numbers can be found in some organisms and specialized cells. It depends on Mg(2+) as a cofactor.

Its subcellular location is the cytoplasm. The protein localises to the cytoskeleton. Tubulin is the major constituent of microtubules, a cylinder consisting of laterally associated linear protofilaments composed of alpha- and beta-tubulin heterodimers. Microtubules grow by the addition of GTP-tubulin dimers to the microtubule end, where a stabilizing cap forms. Below the cap, tubulin dimers are in GDP-bound state, owing to GTPase activity of alpha-tubulin. This chain is Tubulin beta-2 chain (TUBB2), found in Zea mays (Maize).